A 262-amino-acid chain; its full sequence is Ribosome-recycling factor, mitochondrial (262 aa).

The N-terminal 55 residues, 1-55 (MALGIRCFRLLHPAFSSYLADLSRPVSEVPMKTVRGRQRDHIQYSAHPAVPVRQF), are a transit peptide targeting the mitochondrion.

The protein belongs to the RRF family.

The protein resides in the mitochondrion. Responsible for the disassembly of ribosomes from messenger RNA at the termination of mitochondrial protein biosynthesis. Acts in collaboration with GFM2. Promotes mitochondrial ribosome recycling by dissolution of intersubunit contacts. In Rattus norvegicus (Rat), this protein is Ribosome-recycling factor, mitochondrial (Mrrf).